Consider the following 185-residue polypeptide: Putative gustatory receptor clone PTE01 (185 aa).

A helical membrane pass occupies residues M1–A11. Topologically, residues D12–Q42 are extracellular. A helical transmembrane segment spans residues M43–Y62. At D63–G84 the chain is on the cytoplasmic side. Residues L85–V105 form a helical membrane-spanning segment. At L106–N138 the chain is on the extracellular side. A helical membrane pass occupies residues I139 to Y160. At Y161–T182 the chain is on the cytoplasmic side. A helical transmembrane segment spans residues C183–S185.

This sequence belongs to the G-protein coupled receptor 1 family. As to expression, tongue specific.

It is found in the cell membrane. In terms of biological role, possible taste receptor. The protein is Putative gustatory receptor clone PTE01 of Rattus norvegicus (Rat).